The primary structure comprises 228 residues: 3-dehydroquinate dehydratase (228 aa).

Residues glutamate 30–arginine 32 and arginine 62 each bind 3-dehydroquinate. Residue histidine 118 is the Proton donor/acceptor of the active site. Lysine 143 (schiff-base intermediate with substrate) is an active-site residue. 3 residues coordinate 3-dehydroquinate: arginine 186, serine 205, and glutamine 209.

This sequence belongs to the type-I 3-dehydroquinase family. Homodimer.

It carries out the reaction 3-dehydroquinate = 3-dehydroshikimate + H2O. It participates in metabolic intermediate biosynthesis; chorismate biosynthesis; chorismate from D-erythrose 4-phosphate and phosphoenolpyruvate: step 3/7. Its function is as follows. Involved in the third step of the chorismate pathway, which leads to the biosynthesis of aromatic amino acids. Catalyzes the cis-dehydration of 3-dehydroquinate (DHQ) and introduces the first double bond of the aromatic ring to yield 3-dehydroshikimate. The sequence is that of 3-dehydroquinate dehydratase from Streptococcus pyogenes serotype M12 (strain MGAS9429).